Reading from the N-terminus, the 303-residue chain is Cyclin-dependent kinase B1-1 (303 aa).

In terms of domain architecture, Protein kinase spans Tyr-4 to Phe-295. ATP-binding positions include Val-10–Val-18 and Lys-33. A Phosphothreonine modification is found at Thr-14. Residue Tyr-15 is modified to Phosphotyrosine. Residue Asp-136 is the Proton acceptor of the active site. At Thr-170 the chain carries Phosphothreonine.

This sequence belongs to the protein kinase superfamily. CMGC Ser/Thr protein kinase family. CDC2/CDKX subfamily. Expressed in actively dividing cells: root and shoot apical meristems, and young leaves.

The catalysed reaction is L-seryl-[protein] + ATP = O-phospho-L-seryl-[protein] + ADP + H(+). It catalyses the reaction L-threonyl-[protein] + ATP = O-phospho-L-threonyl-[protein] + ADP + H(+). The enzyme catalyses [DNA-directed RNA polymerase] + ATP = phospho-[DNA-directed RNA polymerase] + ADP + H(+). This is Cyclin-dependent kinase B1-1 (CDKB1-1) from Oryza sativa subsp. japonica (Rice).